Reading from the N-terminus, the 243-residue chain is Ubiquinone/menaquinone biosynthesis C-methyltransferase UbiE (243 aa).

Residues Thr-69, Asp-90, and Asp-116–Ala-117 contribute to the S-adenosyl-L-methionine site.

Belongs to the class I-like SAM-binding methyltransferase superfamily. MenG/UbiE family.

It carries out the reaction a 2-demethylmenaquinol + S-adenosyl-L-methionine = a menaquinol + S-adenosyl-L-homocysteine + H(+). The enzyme catalyses a 2-methoxy-6-(all-trans-polyprenyl)benzene-1,4-diol + S-adenosyl-L-methionine = a 5-methoxy-2-methyl-3-(all-trans-polyprenyl)benzene-1,4-diol + S-adenosyl-L-homocysteine + H(+). It functions in the pathway quinol/quinone metabolism; menaquinone biosynthesis; menaquinol from 1,4-dihydroxy-2-naphthoate: step 2/2. The protein operates within cofactor biosynthesis; ubiquinone biosynthesis. Functionally, methyltransferase required for the conversion of demethylmenaquinol (DMKH2) to menaquinol (MKH2) and the conversion of 2-polyprenyl-6-methoxy-1,4-benzoquinol (DDMQH2) to 2-polyprenyl-3-methyl-6-methoxy-1,4-benzoquinol (DMQH2). This chain is Ubiquinone/menaquinone biosynthesis C-methyltransferase UbiE, found in Ralstonia pickettii (strain 12J).